We begin with the raw amino-acid sequence, 196 residues long: MPKVGMREVRRAQLIDATLLTIDQSGLSGTTLASVAQRANISTGIVSHYFGDKDGLLEATMRHILRDLWAATTRRRIAAKAQPRARLRAIVAANFDVSQVSGPVMKTWLAFWSESMHEPALRRLQHVNTRRLYSNLCAEFAKELPRACARRAASGLAAMIDGLWLRGALSGDPFDTKAALRLANDYIDLLLAQSAA.

Positions 8–68 (EVRRAQLIDA…ATMRHILRDL (61 aa)) constitute an HTH tetR-type domain. A DNA-binding region (H-T-H motif) is located at residues 31–50 (TLASVAQRANISTGIVSHYF).

The protein operates within amine and polyamine biosynthesis; betaine biosynthesis via choline pathway [regulation]. Its function is as follows. Repressor involved in the biosynthesis of the osmoprotectant glycine betaine. It represses transcription of the choline transporter BetT and the genes of BetAB involved in the synthesis of glycine betaine. The polypeptide is HTH-type transcriptional regulator BetI (Paraburkholderia phymatum (strain DSM 17167 / CIP 108236 / LMG 21445 / STM815) (Burkholderia phymatum)).